Reading from the N-terminus, the 549-residue chain is Frizzled/smoothened-like sans CRD protein A (549 aa).

An N-terminal signal peptide occupies residues 1-22 (MKFNFKLILIILIINQILIINC). Over 23-89 (KENKILEIYK…EVNTLSLMIK (67 aa)) the chain is Extracellular. A glycan (N-linked (GlcNAc...) asparagine) is linked at N63. The chain crosses the membrane as a helical span at residues 90-110 (ITGTISFIASLILLLIYSPLI). Residues 111-119 (NRMGYNRHT) are Cytoplasmic-facing. A helical membrane pass occupies residues 120–140 (IGIFFLTFSVFLIMLTDIIYV). The Extracellular segment spans residues 141–162 (HHGNDLICPQSHRYSRQNDSGC). A glycan (N-linked (GlcNAc...) asparagine) is linked at N158. Residues 163–183 (TITGILFQYGCIAAVLFWATL) form a helical membrane-spanning segment. The Cytoplasmic segment spans residues 184-198 (SLDLYLTLKKISTKK). The helical transmembrane segment at 199-219 (VEKWYLIILTLIALILTFVPL) threads the bilayer. Topologically, residues 220–241 (VKKSYGYLVTGLACWILDSTDQ) are extracellular. The chain crosses the membrane as a helical span at residues 242–262 (IIFFWAPFTAILGIGSILIVL). Topologically, residues 263–287 (VVYEIYKISKITKQNRGIFQSHIRP) are cytoplasmic. A helical transmembrane segment spans residues 288-308 (LLMVLFIFGQFLFILAFNALI). Residues 309-346 (NNKYDEYSARMDSYIDCLFSSSSYSYLCRLKTFPFEME) are Extracellular-facing. The helical transmembrane segment at 347–367 (FIVLFFLRLIGIEVLIFYGFT) threads the bilayer. Residues 368-549 (QQTKKILLHS…NNNSNNDENN (182 aa)) are Cytoplasmic-facing. 2 stretches are compositionally biased toward low complexity: residues 417-474 (NNNN…SQQN) and 536-549 (NKNI…DENN). Disordered regions lie at residues 417–483 (NNNN…QKLS) and 528–549 (QYEE…DENN). Residues 432 to 475 (NNLNNNLNNNNLNNNNNLNNLNNLNINNNLKNSQNNLNNSQQNE) are a coiled coil.

It belongs to the G-protein coupled receptor Fz/Smo family.

The protein resides in the membrane. The sequence is that of Frizzled/smoothened-like sans CRD protein A (fscA) from Dictyostelium discoideum (Social amoeba).